Reading from the N-terminus, the 276-residue chain is Dermonecrotic toxin LlSicTox-alphaIV3 (276 aa).

The active site involves H5. Mg(2+)-binding residues include E25 and D27. H41 serves as the catalytic Nucleophile. 2 disulfides stabilise this stretch: C45/C51 and C47/C192. D85 is a Mg(2+) binding site.

This sequence belongs to the arthropod phospholipase D family. Class II subfamily. The cofactor is Mg(2+). Expressed by the venom gland.

Its subcellular location is the secreted. It catalyses the reaction an N-(acyl)-sphingosylphosphocholine = an N-(acyl)-sphingosyl-1,3-cyclic phosphate + choline. The enzyme catalyses an N-(acyl)-sphingosylphosphoethanolamine = an N-(acyl)-sphingosyl-1,3-cyclic phosphate + ethanolamine. It carries out the reaction a 1-acyl-sn-glycero-3-phosphocholine = a 1-acyl-sn-glycero-2,3-cyclic phosphate + choline. The catalysed reaction is a 1-acyl-sn-glycero-3-phosphoethanolamine = a 1-acyl-sn-glycero-2,3-cyclic phosphate + ethanolamine. Dermonecrotic toxins cleave the phosphodiester linkage between the phosphate and headgroup of certain phospholipids (sphingolipid and lysolipid substrates), forming an alcohol (often choline) and a cyclic phosphate. This toxin acts on sphingomyelin (SM). It may also act on ceramide phosphoethanolamine (CPE), lysophosphatidylcholine (LPC) and lysophosphatidylethanolamine (LPE), but not on lysophosphatidylserine (LPS), and lysophosphatidylglycerol (LPG). It acts by transphosphatidylation, releasing exclusively cyclic phosphate products as second products. Induces dermonecrosis, hemolysis, increased vascular permeability, edema, inflammatory response, and platelet aggregation. This Loxosceles laeta (South American recluse spider) protein is Dermonecrotic toxin LlSicTox-alphaIV3.